The primary structure comprises 171 residues: UPF0398 protein STER_0279 (171 aa).

It belongs to the UPF0398 family.

In Streptococcus thermophilus (strain ATCC BAA-491 / LMD-9), this protein is UPF0398 protein STER_0279.